Reading from the N-terminus, the 618-residue chain is Chaperone protein HtpG (618 aa).

The tract at residues 1-331 is a; substrate-binding; the sequence is MAKHTFQTEV…SEDLPLNVSR (331 aa). Positions 332–541 are b; it reads EILQQNRILA…EDDPNFAMIK (210 aa). Residues 542-618 are c; the sequence is MMRQMGNALG…RLNAMLERAI (77 aa).

Belongs to the heat shock protein 90 family. As to quaternary structure, homodimer.

The protein localises to the cytoplasm. Its function is as follows. Molecular chaperone. Has ATPase activity. This is Chaperone protein HtpG from Wolinella succinogenes (strain ATCC 29543 / DSM 1740 / CCUG 13145 / JCM 31913 / LMG 7466 / NCTC 11488 / FDC 602W) (Vibrio succinogenes).